Reading from the N-terminus, the 1387-residue chain is DNA-directed RNA polymerase subunit beta (1387 aa).

It belongs to the RNA polymerase beta chain family. The RNAP catalytic core consists of 2 alpha, 1 beta, 1 beta' and 1 omega subunit. When a sigma factor is associated with the core the holoenzyme is formed, which can initiate transcription.

The catalysed reaction is RNA(n) + a ribonucleoside 5'-triphosphate = RNA(n+1) + diphosphate. In terms of biological role, DNA-dependent RNA polymerase catalyzes the transcription of DNA into RNA using the four ribonucleoside triphosphates as substrates. The polypeptide is DNA-directed RNA polymerase subunit beta (Xanthomonas campestris pv. campestris (strain 8004)).